The following is a 478-amino-acid chain: Putrescine oxidase (478 aa).

15-70 (RDVVVVGAGPAGLMAARTLVAAGRTVAVLEARDRVGGRTWSKTVDGAFLEIGGQWI) serves as a coordination point for FAD.

The protein belongs to the flavin monoamine oxidase family. It depends on FAD as a cofactor.

The catalysed reaction is putrescine + O2 + H2O = 4-aminobutanal + H2O2 + NH4(+). The chain is Putrescine oxidase (puo) from Kocuria rosea (Deinococcus erythromyxa).